We begin with the raw amino-acid sequence, 390 residues long: Transforming growth factor beta-1 proprotein (390 aa).

An N-terminal signal peptide occupies residues 1–29 (MPPSRLRLLPLLLPLLWLLVLAPGRPASG). The tract at residues 30-74 (LSTCKTIDMELVKRKRIEAIRGQILSKLRLASPPSQGDVPPGPLP) is straightjacket domain. Residues 75-271 (EAVLALYNST…ATPLERAQHL (197 aa)) form an arm domain region. Asn-82, Asn-136, and Asn-176 each carry an N-linked (GlcNAc...) asparagine glycan. The interval 226–252 (DSKDNTLRVEINGIGPKRRGDLAAIHG) is bowtie tail. Residues 244–246 (RGD) carry the Cell attachment site motif. Intrachain disulfides connect Cys-285/Cys-294, Cys-293/Cys-356, Cys-322/Cys-387, and Cys-326/Cys-389.

It belongs to the TGF-beta family. As to quaternary structure, homodimer; disulfide-linked. Interacts with the serine proteases, HTRA1 and HTRA3: the interaction with either inhibits TGFB1-mediated signaling and the HTRA protease activity is required for this inhibition. May interact with THSD4; this interaction may lead to sequestration by FBN1 microfibril assembly and attenuation of TGFB signaling. Interacts with CD109, DPT and ASPN. Interacts with EFEMP2. Interacts with TSKU; the interaction contributes to regulation of the hair cycle. Interacts with TGFBR3. In terms of assembly, homodimer; disulfide-linked. Interacts with transforming growth factor beta-1 (TGF-beta-1) chain; interaction is non-covalent and maintains TGF-beta-1 in a latent state; each latency-associated peptide (LAP) monomer interacts with TGF-beta-1 in the other monomer. Interacts with LTBP1; leading to regulation of TGF-beta-1 activation. Interacts with LRRC32/GARP; leading to regulation of TGF-beta-1 activation on the surface of activated regulatory T-cells (Tregs). Interacts with LRRC33/NRROS; leading to regulation of TGF-beta-1 in macrophages and microglia. Interacts (via cell attachment site) with integrins ITGAV and ITGB6 (ITGAV:ITGB6), leading to release of the active TGF-beta-1. Interacts with NREP; the interaction results in a decrease in TGFB1 autoinduction. Interacts with HSP90AB1; inhibits latent TGFB1 activation. Homodimer; disulfide-linked. Interacts with TGF-beta receptors (TGFBR1 and TGFBR2), leading to signal transduction. In terms of processing, transforming growth factor beta-1 proprotein: The precursor proprotein is cleaved in the Golgi apparatus by FURIN to form Transforming growth factor beta-1 (TGF-beta-1) and Latency-associated peptide (LAP) chains, which remain non-covalently linked, rendering TGF-beta-1 inactive. N-glycosylated. Deglycosylation leads to activation of Transforming growth factor beta-1 (TGF-beta-1); mechanisms triggering deglycosylation-driven activation of TGF-beta-1 are however unclear.

Its subcellular location is the secreted. It is found in the extracellular space. It localises to the extracellular matrix. Transforming growth factor beta-1 proprotein: Precursor of the Latency-associated peptide (LAP) and Transforming growth factor beta-1 (TGF-beta-1) chains, which constitute the regulatory and active subunit of TGF-beta-1, respectively. Its function is as follows. Required to maintain the Transforming growth factor beta-1 (TGF-beta-1) chain in a latent state during storage in extracellular matrix. Associates non-covalently with TGF-beta-1 and regulates its activation via interaction with 'milieu molecules', such as LTBP1, LRRC32/GARP and LRRC33/NRROS, that control activation of TGF-beta-1. Interaction with LRRC33/NRROS regulates activation of TGF-beta-1 in macrophages and microglia. Interaction with LRRC32/GARP controls activation of TGF-beta-1 on the surface of activated regulatory T-cells (Tregs). Interaction with integrins (ITGAV:ITGB6 or ITGAV:ITGB8) results in distortion of the Latency-associated peptide chain and subsequent release of the active TGF-beta-1. Functionally, multifunctional protein that regulates the growth and differentiation of various cell types and is involved in various processes, such as normal development, immune function, microglia function and responses to neurodegeneration. Activation into mature form follows different steps: following cleavage of the proprotein in the Golgi apparatus, Latency-associated peptide (LAP) and Transforming growth factor beta-1 (TGF-beta-1) chains remain non-covalently linked rendering TGF-beta-1 inactive during storage in extracellular matrix. At the same time, LAP chain interacts with 'milieu molecules', such as LTBP1, LRRC32/GARP and LRRC33/NRROS that control activation of TGF-beta-1 and maintain it in a latent state during storage in extracellular milieus. TGF-beta-1 is released from LAP by integrins (ITGAV:ITGB6 or ITGAV:ITGB8): integrin-binding to LAP stabilizes an alternative conformation of the LAP bowtie tail and results in distortion of the LAP chain and subsequent release of the active TGF-beta-1. Once activated following release of LAP, TGF-beta-1 acts by binding to TGF-beta receptors (TGFBR1 and TGFBR2), which transduce signal. While expressed by many cells types, TGF-beta-1 only has a very localized range of action within cell environment thanks to fine regulation of its activation by Latency-associated peptide chain (LAP) and 'milieu molecules'. Plays an important role in bone remodeling: acts as a potent stimulator of osteoblastic bone formation, causing chemotaxis, proliferation and differentiation in committed osteoblasts. Can promote either T-helper 17 cells (Th17) or regulatory T-cells (Treg) lineage differentiation in a concentration-dependent manner. At high concentrations, leads to FOXP3-mediated suppression of RORC and down-regulation of IL-17 expression, favoring Treg cell development. At low concentrations in concert with IL-6 and IL-21, leads to expression of the IL-17 and IL-23 receptors, favoring differentiation to Th17 cells. Stimulates sustained production of collagen through the activation of CREB3L1 by regulated intramembrane proteolysis (RIP). Mediates SMAD2/3 activation by inducing its phosphorylation and subsequent translocation to the nucleus. Positively regulates odontoblastic differentiation in dental papilla cells, via promotion of IPO7-mediated translocation of phosphorylated SMAD2 to the nucleus and subsequent transcription of target genes. Can induce epithelial-to-mesenchymal transition (EMT) and cell migration in various cell types. The sequence is that of Transforming growth factor beta-1 proprotein (TGFB1) from Cavia porcellus (Guinea pig).